Reading from the N-terminus, the 315-residue chain is Small ribosomal subunit protein uS9m (315 aa).

A mitochondrion-targeting transit peptide spans 1–42 (MMASLRHSITSALRSSRQGCSKSAQWQSLDQQFGALRISSRS). The disordered stretch occupies residues 293–315 (PRKVERKKHGHVKARKMPTWVKR). Over residues 296 to 315 (VERKKHGHVKARKMPTWVKR) the composition is skewed to basic residues.

This sequence belongs to the universal ribosomal protein uS9 family. In terms of assembly, component of the mitochondrial small ribosomal subunit (mt-SSU). Mature N.crassa 74S mitochondrial ribosomes consist of a small (37S) and a large (54S) subunit. The 37S small subunit contains a 16S ribosomal RNA (16S mt-rRNA) and 32 different proteins. The 54S large subunit contains a 23S rRNA (23S mt-rRNA) and 42 different proteins.

Its subcellular location is the mitochondrion. Component of the mitochondrial ribosome (mitoribosome), a dedicated translation machinery responsible for the synthesis of mitochondrial genome-encoded proteins, including at least some of the essential transmembrane subunits of the mitochondrial respiratory chain. The mitoribosomes are attached to the mitochondrial inner membrane and translation products are cotranslationally integrated into the membrane. This is Small ribosomal subunit protein uS9m (mrp-9) from Neurospora crassa (strain ATCC 24698 / 74-OR23-1A / CBS 708.71 / DSM 1257 / FGSC 987).